Reading from the N-terminus, the 95-residue chain is Large ribosomal subunit protein uL23 (95 aa).

Belongs to the universal ribosomal protein uL23 family. In terms of assembly, part of the 50S ribosomal subunit. Contacts protein L29 and trigger factor when it is bound to the ribosome.

In terms of biological role, one of the early assembly protein it binds 23S rRNA. One of the proteins that surrounds the polypeptide exit tunnel on the outside of the subunit. Forms the main docking site for trigger factor binding to the ribosome. This is Large ribosomal subunit protein uL23 from Deinococcus radiodurans (strain ATCC 13939 / DSM 20539 / JCM 16871 / CCUG 27074 / LMG 4051 / NBRC 15346 / NCIMB 9279 / VKM B-1422 / R1).